Reading from the N-terminus, the 421-residue chain is Imidazolonepropionase (421 aa).

Fe(3+) contacts are provided by histidine 81 and histidine 83. Residues histidine 81 and histidine 83 each coordinate Zn(2+). Arginine 90, tyrosine 153, and histidine 186 together coordinate 4-imidazolone-5-propanoate. An N-formimidoyl-L-glutamate-binding site is contributed by tyrosine 153. Histidine 251 serves as a coordination point for Fe(3+). Zn(2+) is bound at residue histidine 251. Residue glutamate 254 coordinates 4-imidazolone-5-propanoate. Aspartate 326 lines the Fe(3+) pocket. Aspartate 326 is a Zn(2+) binding site. 2 residues coordinate N-formimidoyl-L-glutamate: asparagine 328 and glycine 330. Serine 331 contacts 4-imidazolone-5-propanoate.

Belongs to the metallo-dependent hydrolases superfamily. HutI family. Requires Zn(2+) as cofactor. It depends on Fe(3+) as a cofactor.

It is found in the cytoplasm. The enzyme catalyses 4-imidazolone-5-propanoate + H2O = N-formimidoyl-L-glutamate. It participates in amino-acid degradation; L-histidine degradation into L-glutamate; N-formimidoyl-L-glutamate from L-histidine: step 3/3. Catalyzes the hydrolytic cleavage of the carbon-nitrogen bond in imidazolone-5-propanoate to yield N-formimidoyl-L-glutamate. It is the third step in the universal histidine degradation pathway. The sequence is that of Imidazolonepropionase from Streptococcus pyogenes serotype M2 (strain MGAS10270).